A 373-amino-acid polypeptide reads, in one-letter code: 4-hydroxy-3-methylbut-2-en-1-yl diphosphate synthase (flavodoxin) (373 aa).

[4Fe-4S] cluster-binding residues include Cys-270, Cys-273, Cys-305, and Glu-312.

This sequence belongs to the IspG family. The cofactor is [4Fe-4S] cluster.

It carries out the reaction (2E)-4-hydroxy-3-methylbut-2-enyl diphosphate + oxidized [flavodoxin] + H2O + 2 H(+) = 2-C-methyl-D-erythritol 2,4-cyclic diphosphate + reduced [flavodoxin]. Its pathway is isoprenoid biosynthesis; isopentenyl diphosphate biosynthesis via DXP pathway; isopentenyl diphosphate from 1-deoxy-D-xylulose 5-phosphate: step 5/6. In terms of biological role, converts 2C-methyl-D-erythritol 2,4-cyclodiphosphate (ME-2,4cPP) into 1-hydroxy-2-methyl-2-(E)-butenyl 4-diphosphate. In Proteus mirabilis (strain HI4320), this protein is 4-hydroxy-3-methylbut-2-en-1-yl diphosphate synthase (flavodoxin).